We begin with the raw amino-acid sequence, 668 residues long: RING finger protein 214 (668 aa).

Disordered regions lie at residues 1–87 (MAAS…AHEE) and 103–125 (NGSQSDLKDLTNPAGEEGDTSLR). The residue at position 2 (alanine 2) is an N-acetylalanine. Phosphoserine is present on residues serine 15, serine 40, serine 48, and serine 54. Residues 43 to 59 (KQKNLSPPSVSSQMITK) are compositionally biased toward polar residues. A compositionally biased stretch (basic and acidic residues) spans 60–71 (ESNRNAHLEHPE). Serine 196 carries the post-translational modification Phosphoserine. A coiled-coil region spans residues 220 to 379 (QDIEKNLDKM…AEKEAELHLT (160 aa)). Residues 486-552 (FPILNPALSQ…SSETPRPQPV (67 aa)) are disordered. A phosphoserine mark is found at serine 497, serine 511, and serine 516. Pro residues predominate over residues 523–536 (PHMPPAASIPPPPG). The segment at 623 to 665 (CLMCQKLVQPSELHPMACTHALHKECIKFWAQTNTNDTCPFCP) adopts an RING-type; atypical zinc-finger fold.

The chain is RING finger protein 214 (Rnf214) from Mus musculus (Mouse).